The chain runs to 74 residues: Pelophylaxin-3 (74 aa).

A signal peptide spans 1–22 (MFTLKKSLLLVFFLGTISLSLC). Positions 23–39 (EDERNADEDDGEMTEEV) are excised as a propeptide. Cysteines 68 and 74 form a disulfide.

Expressed by the skin glands.

Its subcellular location is the secreted. In terms of biological role, antimicrobial peptide. This is Pelophylaxin-3 from Pelophylax fukienensis (Fukien gold-striped pond frog).